We begin with the raw amino-acid sequence, 305 residues long: Probable DNA-invertase y4cG (305 aa).

The Resolvase/invertase-type recombinase catalytic domain occupies 15–148; it reads RLIGYARVST…SGMQAAKARG (134 aa). Ser23 functions as the O-(5'-phospho-DNA)-serine intermediate in the catalytic mechanism.

It belongs to the site-specific recombinase resolvase family.

The sequence is that of Probable DNA-invertase y4cG from Sinorhizobium fredii (strain NBRC 101917 / NGR234).